Consider the following 271-residue polypeptide: Shikimate dehydrogenase (NADP(+)) (271 aa).

Shikimate contacts are provided by residues 14–16 (SRS) and Thr61. Lys65 functions as the Proton acceptor in the catalytic mechanism. Asn86 and Asp102 together coordinate shikimate. Residues 126 to 130 (GAGGA), 149 to 154 (NRTFSR), and Met213 contribute to the NADP(+) site. Tyr215 contributes to the shikimate binding site. Residue Gly238 coordinates NADP(+).

It belongs to the shikimate dehydrogenase family. As to quaternary structure, homodimer.

The enzyme catalyses shikimate + NADP(+) = 3-dehydroshikimate + NADPH + H(+). The protein operates within metabolic intermediate biosynthesis; chorismate biosynthesis; chorismate from D-erythrose 4-phosphate and phosphoenolpyruvate: step 4/7. In terms of biological role, involved in the biosynthesis of the chorismate, which leads to the biosynthesis of aromatic amino acids. Catalyzes the reversible NADPH linked reduction of 3-dehydroshikimate (DHSA) to yield shikimate (SA). The polypeptide is Shikimate dehydrogenase (NADP(+)) (Histophilus somni (strain 129Pt) (Haemophilus somnus)).